A 301-amino-acid chain; its full sequence is Galectin-6 (301 aa).

Galectin domains follow at residues 19 to 149 (YKRP…INFF) and 173 to 301 (YVGA…YVHI).

The protein is Galectin-6 (Lgals6) of Mus musculus (Mouse).